A 547-amino-acid polypeptide reads, in one-letter code: uncharacterized protein (547 aa).

Over 1 to 19 the chain is Cytoplasmic; that stretch reads MVRLNHAASYFMPIFCSTR. The chain crosses the membrane as a helical span at residues 20 to 40; that stretch reads PHIVILSALFSISLFSLFYAS. Topologically, residues 41–64 are vacuolar; sequence SELLLHQYDDPLMFKPNSQDYFRT. Residues 65-85 traverse the membrane as a helical segment; sequence FLLGLFSPFLYYFLKTFLFNI. Over 86-89 the chain is Cytoplasmic; sequence NQRF. A helical membrane pass occupies residues 90–110; that stretch reads LILNLIVDFPINDVFMLLILI. Residues 111–139 are Vacuolar-facing; it reads GLAYPQVQDHEGGTIKHKECSWHIIPRQA. Residues 140-160 traverse the membrane as a helical segment; sequence YIFGISWALGEFTICIIGNLF. Residues 161–340 lie on the Cytoplasmic side of the membrane; it reads NYQEIADPNI…RFIAFSTAYQ (180 aa). Ser-225 is modified (phosphoserine). A disordered region spans residues 237-271; it reads PIKPLRSSSSTYGSIRQQPHENKKQLHVPDNSQDD. Polar residues predominate over residues 242–253; that stretch reads RSSSSTYGSIRQ. The chain crosses the membrane as a helical span at residues 341 to 361; the sequence is LVTGLLLMILVVGSNIMLTIG. At 362 to 394 the chain is on the vacuolar side; sequence ESLILSMYFVYVRGHEGLFTPVVNYFGSRTISN. The helical transmembrane segment at 395–415 threads the bilayer; that stretch reads FILCVIIPFISLNFLINTSIY. The Cytoplasmic portion of the chain corresponds to 416 to 523; it reads LRRELDDWFN…NWRALARNDS (108 aa). The helical transmembrane segment at 524-544 threads the bilayer; the sequence is FVLGVMVSWSLLVFVTGILST. The Vacuolar portion of the chain corresponds to 545 to 547; that stretch reads VYI.

It is found in the vacuole membrane. This is an uncharacterized protein from Saccharomyces cerevisiae (strain ATCC 204508 / S288c) (Baker's yeast).